We begin with the raw amino-acid sequence, 270 residues long: Glucosamine-6-phosphate deaminase (270 aa).

Asp68 serves as the catalytic Proton acceptor; for enolization step. Residue Asp145 is the For ring-opening step of the active site. Catalysis depends on His147, which acts as the Proton acceptor; for ring-opening step. Glu152 acts as the For ring-opening step in catalysis.

It belongs to the glucosamine/galactosamine-6-phosphate isomerase family. NagB subfamily.

It catalyses the reaction alpha-D-glucosamine 6-phosphate + H2O = beta-D-fructose 6-phosphate + NH4(+). It functions in the pathway amino-sugar metabolism; N-acetylneuraminate degradation; D-fructose 6-phosphate from N-acetylneuraminate: step 5/5. Catalyzes the reversible isomerization-deamination of glucosamine 6-phosphate (GlcN6P) to form fructose 6-phosphate (Fru6P) and ammonium ion. The chain is Glucosamine-6-phosphate deaminase from Bifidobacterium longum subsp. infantis (strain ATCC 15697 / DSM 20088 / JCM 1222 / NCTC 11817 / S12).